The primary structure comprises 448 residues: Glucose-6-phosphate isomerase (448 aa).

E288 functions as the Proton donor in the catalytic mechanism. Active-site residues include H309 and K423.

This sequence belongs to the GPI family.

Its subcellular location is the cytoplasm. It carries out the reaction alpha-D-glucose 6-phosphate = beta-D-fructose 6-phosphate. Its pathway is carbohydrate biosynthesis; gluconeogenesis. It participates in carbohydrate degradation; glycolysis; D-glyceraldehyde 3-phosphate and glycerone phosphate from D-glucose: step 2/4. Its function is as follows. Catalyzes the reversible isomerization of glucose-6-phosphate to fructose-6-phosphate. This is Glucose-6-phosphate isomerase from Fusobacterium nucleatum subsp. nucleatum (strain ATCC 25586 / DSM 15643 / BCRC 10681 / CIP 101130 / JCM 8532 / KCTC 2640 / LMG 13131 / VPI 4355).